A 233-amino-acid chain; its full sequence is Large ribosomal subunit protein uL1 (233 aa).

The protein belongs to the universal ribosomal protein uL1 family. Part of the 50S ribosomal subunit.

Binds directly to 23S rRNA. The L1 stalk is quite mobile in the ribosome, and is involved in E site tRNA release. Its function is as follows. Protein L1 is also a translational repressor protein, it controls the translation of the L11 operon by binding to its mRNA. In Shewanella pealeana (strain ATCC 700345 / ANG-SQ1), this protein is Large ribosomal subunit protein uL1.